A 232-amino-acid chain; its full sequence is 7-cyano-7-deazaguanine synthase (232 aa).

8 to 18 (FSGGQDSTTCL) lines the ATP pocket. Zn(2+) contacts are provided by Cys-188, Cys-197, Cys-200, and Cys-203.

This sequence belongs to the QueC family. Requires Zn(2+) as cofactor.

It catalyses the reaction 7-carboxy-7-deazaguanine + NH4(+) + ATP = 7-cyano-7-deazaguanine + ADP + phosphate + H2O + H(+). The protein operates within purine metabolism; 7-cyano-7-deazaguanine biosynthesis. Catalyzes the ATP-dependent conversion of 7-carboxy-7-deazaguanine (CDG) to 7-cyano-7-deazaguanine (preQ(0)). This Buchnera aphidicola subsp. Schizaphis graminum (strain Sg) protein is 7-cyano-7-deazaguanine synthase.